Reading from the N-terminus, the 1460-residue chain is MSSLKDEVPTETSEDFGFKFLGQKQILPSFNEKLPFASLQNLDISNSKSLFVAASGSKAVVGELQLLRDHITSDSTPLTFKWEKEIPDVIFVCFHGDQVLVSTRNALYSLDLEELSEFRTVTSFEKPVFQLKNVNNTLVILNSVNDLSALDLRTKSTKQLAQNVTSFDVTNSQLAVLLKDRSFQSFAWRNGEMEKQFEFSLPSELEELPVEEYSPLSVTILSPQDFLAVFGNVISETDDEVSYDQKMYIIKHIDGSASFQETFDITPPFGQIVRFPYMYKVTLSGLIEPDANVNVLASSCSSEVSIWDSKQVIEPSQDSERAVLPISEETDKDTNPIGVAVDVVTSGTILEPCSGVDTIERLPLVYILNNEGSLQIVGLFHVAAIKSGHYSINLESLEHEKSLSPTSEKIPIAGQEQEEKKKNNESSKALSENPFTSANTSGFTFLKTQPAAANSLQSQSSSTFGAPSFGSSAFKIDLPSVSSTSTGVASSEQDATDPASAKPVFGKPAFGAIAKEPSTSEYAFGKPSFGAPSFGSGKSSVESPASGSAFGKPSFGTPSFGSGNSSVEPPASGSAFGKPSFGTPSFGSGNSSAEPPASGSAFGKPSFGTSAFGTASSNETNSGSIFGKAAFGSSSFAPANNELFGSNFTISKPTVDSPKEVDSTSPFPSSGDQSEDESKSDVDSSSTPFGTKPNTSTKPKTNAFDFGSSSFGSGFSKALESVGSDTTFKFGTQASPFSSQLGNKSPFSSFTKDDTENGSLSKGSTSEINDDNEEHESNGPNVSGNDLTDSTVEQTSSTRLPETPSDEDGEVVEEEAQKSPIGKLTETIKKSANIDMAGLKNPVFGNHVKAKSESPFSAFATNITKPSSTTPAFSFGNSTMNKSNTSTVSPMEEADTKETSEKGPITLKSVENPFLPAKEERTGESSKKDHNDDPKDGYVSGSEISVRTSESAFDTTANEEIPKSQDVNNHEKSETDPKYSQHAVVDHDNKSKEMNETSKNNERSGQPNHGVQGDGIALKKDNEKENFDSNMAIKQFEDHQSSEEDASEKDSRQSSEVKESDDNMSLNSDRDESISESYDKLEDINTDELPHGGEAFKAREVSASADFDVQTSLEDNYAESGIQTDLSESSKENEVQTDAIPVKHNSTQTVKKEAVDNGLQTEPVETCNFSVQTFEGDENYLAEQCKPKQLKEYYTSAKVSNIPFVSQNSTLRLIESTFQTVEAEFTVLMENIRNMDTFFTDQSSIPLVKRTVRSINNLYTWRIPEAEILLNIQNNIKCEQMQITNANIQDLKEKVTDYVRKDIAQITEDVANAKEEYLFLMHFDDASSGYVKDLSTHQFRMQKTLRQKLFDVSAKINHTEELLNILKLFTVKNKRLDDNPLVAKLAKESLARDGLLKEIKLLREQVSRLQLEEKGKKASSFDASSSITKDMKGFKVVEVGLAMNTKKQIGDFFKNLNMAK.

The tract at residues 1–500 is interaction with DBP5; it reads MSSLKDEVPT…SEQDATDPAS (500 aa). One copy of the FG 1 repeat lies at 228–231; that stretch reads AVFG. The stretch at 267–270 is one PXFG 1 repeat; it reads PPFG. The disordered stretch occupies residues 401-435; it reads KSLSPTSEKIPIAGQEQEEKKKNNESSKALSENPF. Position 404 is a phosphoserine (S404). The stretch at 462 to 470 is one SXFGXPXFG 1 repeat; sequence STFGAPSFG. The disordered stretch occupies residues 483–504; sequence STSTGVASSEQDATDPASAKPV. The interactions with CRM1 and GLE1 stretch occupies residues 497–701; sequence DPASAKPVFG…KPNTSTKPKT (205 aa). One copy of the SXFGXPXFG 2; approximate repeat lies at 503-511; that stretch reads PVFGKPAFG. An SXFGXPXFG 3; approximate repeat occupies 522–530; that stretch reads YAFGKPSFG. One copy of the PXFG 2 repeat lies at 532 to 535; it reads PSFG. The segment at 533–619 is disordered; that stretch reads SFGSGKSSVE…SAFGTASSNE (87 aa). Composition is skewed to polar residues over residues 536 to 546, 556 to 567, 582 to 593, and 607 to 619; these read SGKSSVESPAS, GTPSFGSGNSSV, GTPSFGSGNSSA, and FGTSAFGTASSNE. Residues 548–556 form an SXFGXPXFG 4 repeat; sequence SAFGKPSFG. A PXFG 3 repeat occupies 558–561; sequence PSFG. One copy of the SXFGXPXFG 5 repeat lies at 574–582; it reads SAFGKPSFG. Residues 584–587 form a PXFG 4 repeat; it reads PSFG. One copy of the SXFGXPXFG 6 repeat lies at 600–608; it reads SAFGKPSFG. The SXFG 1 repeat unit spans residues 610 to 613; the sequence is SAFG. Residues 624–632 form an SXFGXPXFG 7; approximate repeat; the sequence is SIFGKAAFG. One copy of the FG 2 repeat lies at 642–645; the sequence is ELFG. Positions 647–704 are disordered; the sequence is NFTISKPTVDSPKEVDSTSPFPSSGDQSEDESKSDVDSSSTPFGTKPNTSTKPKTNAF. A Phosphoserine modification is found at S657. The span at 683-704 shows a compositional bias: low complexity; that stretch reads DSSSTPFGTKPNTSTKPKTNAF. Residues 687-690 form an FG 3 repeat; sequence TPFG. Residues 704–707 form an FXFG 1 repeat; it reads FDFG. The stretch at 709 to 712 is one SXFG 2 repeat; sequence SSFG. S724 carries the post-translational modification Phosphoserine. 3 stretches are compositionally biased toward polar residues: residues 727–750, 757–767, and 778–800; these read TFKFGTQASPFSSQLGNKSPFSSF, NGSLSKGSTSE, and NGPNVSGNDLTDSTVEQTSSTRL. The segment at 727 to 824 is disordered; that stretch reads TFKFGTQASP…EAQKSPIGKL (98 aa). The FXFG 2 repeat unit spans residues 728–731; that stretch reads FKFG. 2 positions are modified to phosphoserine: S735 and S745. T803 carries the post-translational modification Phosphothreonine. Residues 804–814 are compositionally biased toward acidic residues; that stretch reads PSDEDGEVVEE. Phosphoserine is present on residues S805 and S819. A PXFG 5 repeat occupies 842–845; sequence PVFG. The segment covering 861 to 889 has biased composition (polar residues); it reads TNITKPSSTTPAFSFGNSTMNKSNTSTVS. The tract at residues 861-1092 is disordered; the sequence is TNITKPSSTT…DINTDELPHG (232 aa). An FXFG 3 repeat occupies 873–876; that stretch reads FSFG. S889 is modified (phosphoserine). Over residues 917-936 the composition is skewed to basic and acidic residues; that stretch reads AKEERTGESSKKDHNDDPKD. Position 940 is a phosphoserine (S940). The span at 942–958 shows a compositional bias: polar residues; it reads SEISVRTSESAFDTTAN. Composition is skewed to basic and acidic residues over residues 960–1002, 1017–1027, 1035–1061, and 1068–1092; these read EIPK…KNNE, ALKKDNEKENF, QFEDHQSSEEDASEKDSRQSSEVKESD, and SDRDESISESYDKLEDINTDELPHG. Residues 1086–1175 are interaction with DYN2; it reads TDELPHGGEA…TCNFSVQTFE (90 aa). Positions 1223–1460 are interaction with NUP82; it reads AEFTVLMENI…DFFKNLNMAK (238 aa). Coiled coils occupy residues 1279 to 1320 and 1383 to 1418; these read EQMQ…YLFL and AKLAKESLARDGLLKEIKLLREQVSRLQLEEKGKKA.

As to quaternary structure, component of the nuclear pore complex (NPC). NPC constitutes the exclusive means of nucleocytoplasmic transport. NPCs allow the passive diffusion of ions and small molecules and the active, nuclear transport receptor-mediated bidirectional transport of macromolecules such as proteins, RNAs, ribonucleoparticles (RNPs), and ribosomal subunits across the nuclear envelope. Due to its 8-fold rotational symmetry, all subunits are present with 8 copies or multiples thereof. Part of the NUP82 subcomplex, interacts with NUP82 through its C-terminal coiled coil. This subcomplex is the base for interactions with NUP116 and GLE2, with NUP42 and GLE1 and with DYN2. Interacts directly with DYN2. Interacts through its FG repeats with karyopherins, such as heterodimeric mRNA transport factor MEX67/MTR2, CRM1 (XPO1), and PSE1 (GSP1-GDP dependent). Interaction with CRM1 (XPO1) is GSP1-GTP dependent and stimulated by RNA1. NUP159 also interacts with GLE1 and the ATP-dependent RNA helicase DBP5.

It is found in the nucleus. The protein resides in the nuclear pore complex. The protein localises to the nucleus membrane. Its function is as follows. Functions as a component of the nuclear pore complex (NPC). NPC components, collectively referred to as nucleoporins (NUPs), can play the role of both NPC structural components and of docking or interaction partners for transiently associated nuclear transport factors. Active directional transport is assured by both, a Phe-Gly (FG) repeat affinity gradient for these transport factors across the NPC and a transport cofactor concentration gradient across the nuclear envelope (GSP1 and GSP2 GTPases associated predominantly with GTP in the nucleus, with GDP in the cytoplasm). NUP159 plays an important role in several nuclear export pathways including poly(A)+ RNA, pre-ribosome, and protein export. The protein is Nucleoporin NUP159 (NUP159) of Saccharomyces cerevisiae (strain ATCC 204508 / S288c) (Baker's yeast).